The following is a 237-amino-acid chain: Lectin alpha chain (237 aa).

The Mn(2+) site is built by E8 and D10. Ca(2+) is bound by residues D10, Y12, N14, and D19. Y12 and N14 together coordinate a carbohydrate. Positions 19 and 24 each coordinate Mn(2+). An a carbohydrate-binding site is contributed by 99-100 (LY). D208 is a binding site for Ca(2+). R228 contributes to the a carbohydrate binding site.

This sequence belongs to the leguminous lectin family. As to quaternary structure, homodimer and homotetramer. Oligomerization is pH-dependent with homotetramers forming at pH 4 and above.

Functionally, D-mannose/D-glucose-binding lectin. Has anti-inflammatory activity in animal models when applied intravenously. Has antinociceptive activity in mice when applied intravenously. This is Lectin alpha chain from Canavalia boliviana.